The sequence spans 316 residues: Ribosomal RNA small subunit methyltransferase H (316 aa).

Residues 36–38 (GGH), D56, F83, D104, and Q111 contribute to the S-adenosyl-L-methionine site.

It belongs to the methyltransferase superfamily. RsmH family.

It localises to the cytoplasm. It carries out the reaction cytidine(1402) in 16S rRNA + S-adenosyl-L-methionine = N(4)-methylcytidine(1402) in 16S rRNA + S-adenosyl-L-homocysteine + H(+). Functionally, specifically methylates the N4 position of cytidine in position 1402 (C1402) of 16S rRNA. This is Ribosomal RNA small subunit methyltransferase H from Protochlamydia amoebophila (strain UWE25).